The chain runs to 560 residues: Putative transport protein VFMJ11_0927 (560 aa).

A run of 5 helical transmembrane segments spans residues 8–28 (LLSQ…LFIA), 37–57 (LGSS…GYTF), 66–86 (FMLF…GIFL), 94–114 (LLVL…GHYF), and 161–181 (NLSV…ILLA). RCK C-terminal domains are found at residues 203–292 (RGIG…FRNG) and 293–376 (KEVF…KIGF). Transmembrane regions (helical) follow at residues 386–406 (LLAF…TMSF), 409–429 (VTFG…LGFL), 451–471 (GLLV…NEYF), 478–498 (VLAA…LVGA), and 539–559 (AGTY…MILL).

Belongs to the AAE transporter (TC 2.A.81) family. YbjL subfamily.

The protein localises to the cell membrane. The protein is Putative transport protein VFMJ11_0927 of Aliivibrio fischeri (strain MJ11) (Vibrio fischeri).